The following is a 798-amino-acid chain: RNA cytosine-C(5)-methyltransferase NSUN2 (798 aa).

The span at 1–13 (MGRRNRRNRQRHQ) shows a compositional bias: basic residues. The interval 1-30 (MGRRNRRNRQRHQRSTEQRSPAEEEQRRKA) is disordered. The segment covering 14–30 (RSTEQRSPAEEEQRRKA) has biased composition (basic and acidic residues). Residues 186–192 (CAAPGSK), D217, D244, and D270 contribute to the S-adenosyl-L-methionine site. Catalysis depends on C323, which acts as the Nucleophile. Disordered stretches follow at residues 476–499 (DEPA…SSKT) and 723–798 (KACD…ESVD). Basic and acidic residues predominate over residues 723-747 (KACDEEHIDEKMDIDGAKEESKELS). A compositionally biased stretch (acidic residues) spans 751–762 (SGDDEDPKEEDV). A compositionally biased stretch (basic and acidic residues) spans 763 to 772 (IDRGVLEHVA).

It belongs to the class I-like SAM-binding methyltransferase superfamily. RsmB/NOP family. TRM4 subfamily.

It localises to the nucleus. Its subcellular location is the nucleolus. It is found in the cytoplasm. The protein resides in the mitochondrion. The protein localises to the cytoskeleton. It localises to the spindle. Its subcellular location is the secreted. It is found in the extracellular exosome. It catalyses the reaction cytidine(48) in tRNA + S-adenosyl-L-methionine = 5-methylcytidine(48) in tRNA + S-adenosyl-L-homocysteine + H(+). It carries out the reaction cytidine(49) in tRNA + S-adenosyl-L-methionine = 5-methylcytidine(49) in tRNA + S-adenosyl-L-homocysteine + H(+). The catalysed reaction is cytidine(50) in tRNA + S-adenosyl-L-methionine = 5-methylcytidine(50) in tRNA + S-adenosyl-L-homocysteine + H(+). The enzyme catalyses cytidine(34) in tRNA precursor + S-adenosyl-L-methionine = 5-methylcytidine(34) in tRNA precursor + S-adenosyl-L-homocysteine + H(+). It catalyses the reaction a cytidine in mRNA + S-adenosyl-L-methionine = a 5-methylcytidine in mRNA + S-adenosyl-L-homocysteine + H(+). RNA cytosine C(5)-methyltransferase that methylates cytosine to 5-methylcytosine (m5C) in various RNAs, such as tRNAs, mRNAs and some long non-coding RNAs (lncRNAs). Involved in various processes, such as epidermal stem cell differentiation, testis differentiation and maternal to zygotic transition during early development: acts by increasing protein synthesis; cytosine C(5)-methylation promoting tRNA stability and preventing mRNA decay. Methylates cytosine to 5-methylcytosine (m5C) at positions 34 and 48 of intron-containing tRNA(Leu)(CAA) precursors, and at positions 48, 49 and 50 of tRNA(Gly)(GCC) precursors. tRNA methylation is required generation of RNA fragments derived from tRNAs (tRFs). Also mediates C(5)-methylation of mitochondrial tRNAs. Catalyzes cytosine C(5)-methylation of mRNAs, leading to stabilize them and prevent mRNA decay. Cytosine C(5)-methylation of mRNAs also regulates mRNA export. Also mediates cytosine C(5)-methylation of non-coding RNAs, such as vault RNAs (vtRNAs), promoting their processing into regulatory small RNAs. Required for proper spindle assembly and chromosome segregation, independently of its methyltransferase activity. This Xenopus tropicalis (Western clawed frog) protein is RNA cytosine-C(5)-methyltransferase NSUN2.